The following is a 363-amino-acid chain: tRNA(Met) cytidine acetate ligase (363 aa).

Residues 7-20, glycine 96, asparagine 152, and arginine 175 contribute to the ATP site; that span reads IAEYNPFHTGHKYL.

Belongs to the TmcAL family.

The protein resides in the cytoplasm. It carries out the reaction cytidine(34) in elongator tRNA(Met) + acetate + ATP = N(4)-acetylcytidine(34) in elongator tRNA(Met) + AMP + diphosphate. Functionally, catalyzes the formation of N(4)-acetylcytidine (ac(4)C) at the wobble position of elongator tRNA(Met), using acetate and ATP as substrates. First activates an acetate ion to form acetyladenylate (Ac-AMP) and then transfers the acetyl group to tRNA to form ac(4)C34. The chain is tRNA(Met) cytidine acetate ligase from Streptococcus suis (strain 98HAH33).